A 189-amino-acid polypeptide reads, in one-letter code: Putative lipoprotein LppK (189 aa).

The signal sequence occupies residues 1 to 22 (MRRNIRVTLGAATIVAALGLSG). Residue Cys-23 is the site of N-palmitoyl cysteine attachment. Cys-23 carries the S-diacylglycerol cysteine lipid modification. Disordered stretches follow at residues 26–49 (PEFK…LEAA) and 166–189 (MGNS…TPPG). A compositionally biased stretch (low complexity) spans 169-179 (SPDSTPSATSP). The segment covering 180–189 (APAPSPTPPG) has biased composition (pro residues).

Belongs to the MTB12 family.

Its subcellular location is the cell membrane. The sequence is that of Putative lipoprotein LppK (lppK) from Mycobacterium tuberculosis (strain CDC 1551 / Oshkosh).